The chain runs to 76 residues: Omega-conotoxin-like Ai6.3 (76 aa).

An N-terminal signal peptide occupies residues 1 to 22 (MKLTCLMIVAVLFLTAWTFVTA). The propeptide occupies 23-50 (VPDSSNALENLYLKAHHEMNNPEDSELN). 3 disulfides stabilise this stretch: cysteine 53–cysteine 67, cysteine 60–cysteine 71, and cysteine 66–cysteine 75.

This sequence belongs to the conotoxin O1 superfamily. Expressed by the venom duct.

Its subcellular location is the secreted. Its function is as follows. Omega-conotoxins act at presynaptic membranes, they bind and block voltage-gated calcium channels (Cav). This chain is Omega-conotoxin-like Ai6.3, found in Conus ammiralis (Admiral cone).